The chain runs to 651 residues: Nucleolin (651 aa).

Over residues 1–11 (MVKLAKGAKTQ) the composition is skewed to low complexity. Residues 1–230 (MVKLAKGAKT…AKKTKTDTAS (230 aa)) form a disordered region. A compositionally biased stretch (acidic residues) spans 26–45 (EDSEEEEDMEEDDSSDEEVE). Residues 54-79 (KKTATPAKATPGKAATPGKKGATPAK) show a composition bias toward low complexity. Over residues 89 to 101 (SEEEEDDSDEEAE) the composition is skewed to acidic residues. Over residues 106-116 (IKNKPVAKKAV) the composition is skewed to basic residues. 3 stretches are compositionally biased toward acidic residues: residues 122–134 (SEED…ESEE), 155–168 (SEEE…DEPM), and 183–204 (AEED…EEEQ). Position 155 is a phosphoserine (Ser-155). The span at 219–228 (PEAKKTKTDT) shows a compositional bias: basic and acidic residues. 4 consecutive RRM domains span residues 233-309 (LSIF…KAMA), 325-399 (RTLF…FTGE), 415-488 (KVLV…FSQG), and 503-578 (KTLF…FAKP). A disordered region spans residues 574–651 (DFAKPKGDSQ…GQGKKMRFDD (78 aa)). Positions 585-644 (GGRGGFGRGGGFRGGRGGRGGGGGRGFGGRGGGRGRGGFGGRGGGGFRGGQGGGFRGGQG) are enriched in gly residues.

The protein resides in the nucleus. Its subcellular location is the nucleolus. Functionally, nucleolin is the major nucleolar protein of growing eukaryotic cells. It is found associated with intranucleolar chromatin and pre-ribosomal particles. It induces chromatin decondensation by binding to histone H1. It is thought to play a role in pre-rRNA transcription and ribosome assembly. The chain is Nucleolin (ncl) from Xenopus laevis (African clawed frog).